We begin with the raw amino-acid sequence, 305 residues long: Exosome complex component RRP45 (305 aa).

It belongs to the RNase PH family. In terms of assembly, component of the RNA exosome complex. Specifically part of the catalytically inactive RNA exosome core complex (Exo-9) which may associate with the catalytic subunits RRP6 and DIS3 in cytoplasmic- and nuclear-specific RNA exosome complex forms. Exo-9 is formed by a hexameric base ring of RNase PH domain-containing subunits and a cap ring consisting of CSL4, RRP4 and RRP40. Interacts with LRP1.

It localises to the cytoplasm. The protein localises to the nucleus. The protein resides in the nucleolus. Functionally, non-catalytic component of the RNA exosome complex which has 3'-&gt;5' exoribonuclease activity and participates in a multitude of cellular RNA processing and degradation events. In the nucleus, the RNA exosome complex is involved in proper maturation of stable RNA species such as rRNA, snRNA and snoRNA, in the elimination of RNA processing by-products and non-coding 'pervasive' transcripts, such as antisense RNA species and cryptic unstable transcripts (CUTs), and of mRNAs with processing defects, thereby limiting or excluding their export to the cytoplasm. In the cytoplasm, the RNA exosome complex is involved in general mRNA turnover and in RNA surveillance pathways, preventing translation of aberrant mRNAs. The catalytic inactive RNA exosome core complex of 9 subunits (Exo-9) is proposed to play a pivotal role in the binding and presentation of RNA for ribonucleolysis, and to serve as a scaffold for the association with catalytic subunits and accessory proteins or complexes. RRP45 is part of the hexameric ring of RNase PH domain-containing subunits proposed to form a central channel which threads RNA substrates for degradation. This Saccharomyces cerevisiae (strain ATCC 204508 / S288c) (Baker's yeast) protein is Exosome complex component RRP45 (RRP45).